Here is a 428-residue protein sequence, read N- to C-terminus: YTH domain-containing protein ECT1 (428 aa).

Positions 245-382 (AKFFVIKSYS…EHGTKIIKIF (138 aa)) constitute a YTH domain. RNA is bound by residues 251-253 (KSY), Asp-257, 267-268 (WS), Asn-300, Trp-324, Trp-329, and Trp-337.

Interacts (via C-terminus) with CIPK1. In terms of tissue distribution, expressed in root apex, shoot apex, lateral root primordia, stamens, carpels and trichomes.

The protein localises to the nucleus. It is found in the cytoplasm. Its function is as follows. Specifically recognizes and binds N6-methyladenosine (m6A)-containing RNAs, and regulates mRNA stability. M6A is a modification present at internal sites of mRNAs and some non-coding RNAs and plays a role in mRNA stability and processing. This is YTH domain-containing protein ECT1 from Arabidopsis thaliana (Mouse-ear cress).